The sequence spans 313 residues: Potassium channel subfamily K member 6 (313 aa).

The Cytoplasmic segment spans residues 1-4 (MRRG). The chain crosses the membrane as a helical span at residues 5 to 25 (ALLASALAAYAGYLALGALLV). Asn-79 and Asn-85 each carry an N-linked (GlcNAc...) asparagine glycan. The segment at residues 90-115 (AWDFASALFFASTLVTTVGYGYTTPL) is an intramembrane region (pore-forming). The K(+) site is built by Thr-106, Val-107, Gly-108, and Tyr-109. The selectivity filter 1 stretch occupies residues 106–111 (TVGYGY). Residues 121–141 (AFSIVFALLGVPITMLLLTAS) traverse the membrane as a helical segment. Residues 142 to 172 (AQRLSLLLTHAPLSWLSLHWGWPPQRAARWH) are Cytoplasmic-facing. A helical membrane pass occupies residues 173 to 193 (LVALLMVIVAIFFLVPAAVFA). An intramembrane region (pore-forming) is located at residues 199–223 (WSFLDAFYFCFISLSTIGLGDYVPG). K(+)-binding residues include Thr-214, Ile-215, and Gly-216. The selectivity filter 2 stretch occupies residues 214–219 (TIGLGD). The helical transmembrane segment at 236 to 256 (VLVTAYLFLGLVAMVLVLQTF) threads the bilayer. The Cytoplasmic segment spans residues 257-313 (RRVSDLHGLTELILLPDPDPASLSQDEDDQVAVLDARTDLHQHLSAASHADYASIPR). 2 short sequence motifs (lysosomal targeting signal) span residues 282-290 (DEDDQVAVL) and 308-312 (YASIP).

This sequence belongs to the two pore domain potassium channel (TC 1.A.1.8) family. As to quaternary structure, homodimer; disulfide-linked. Post-translationally, N-glycosylation is necessary for targeting to lysosomes.

The protein localises to the late endosome membrane. It is found in the lysosome membrane. The enzyme catalyses K(+)(in) = K(+)(out). Functionally, k(+) channel that conducts outward rectifying currents at the membranes of the endolysosomal system. Active in lysosomes where it regulates lysosome numbers and size. In macrophages, enables K(+) efflux coupled to ATP-induced NLRP3 inflammasome activation upon bacterial infection. Cooperates with ATP-gated P2RX7 to activate NLRP3 inflammasome, with P2RX7 conducting Ca(2+) and Na(+) influx that sets the membrane potential for K(+) efflux. The chain is Potassium channel subfamily K member 6 from Mus musculus (Mouse).